A 367-amino-acid chain; its full sequence is Cytochrome b (367 aa).

4 consecutive transmembrane segments (helical) span residues Phe-25–Ile-45, Trp-69–Ile-90, Trp-105–Leu-125, and Phe-170–Ile-190. Heme b contacts are provided by His-75 and His-89. Heme b is bound by residues His-174 and His-188. His-193 is a binding site for a ubiquinone. Helical transmembrane passes span Tyr-218 to Thr-238, Leu-280 to His-300, Leu-312 to Thr-332, and Phe-339 to Pro-358.

It belongs to the cytochrome b family. As to quaternary structure, the cytochrome bc1 complex contains 3 respiratory subunits (MT-CYB, CYC1 and UQCRFS1), 2 core proteins (UQCRC1 and UQCRC2) and probably 6 low-molecular weight proteins. It depends on heme b as a cofactor.

It is found in the mitochondrion inner membrane. Component of the ubiquinol-cytochrome c reductase complex (complex III or cytochrome b-c1 complex) that is part of the mitochondrial respiratory chain. The b-c1 complex mediates electron transfer from ubiquinol to cytochrome c. Contributes to the generation of a proton gradient across the mitochondrial membrane that is then used for ATP synthesis. The chain is Cytochrome b (MT-CYB) from Austrelaps superbus (Lowland copperhead snake).